Reading from the N-terminus, the 193-residue chain is dTTP/UTP pyrophosphatase (193 aa).

D70 functions as the Proton acceptor in the catalytic mechanism.

Belongs to the Maf family. YhdE subfamily. A divalent metal cation is required as a cofactor.

The protein localises to the cytoplasm. It carries out the reaction dTTP + H2O = dTMP + diphosphate + H(+). It catalyses the reaction UTP + H2O = UMP + diphosphate + H(+). In terms of biological role, nucleoside triphosphate pyrophosphatase that hydrolyzes dTTP and UTP. May have a dual role in cell division arrest and in preventing the incorporation of modified nucleotides into cellular nucleic acids. In Alcanivorax borkumensis (strain ATCC 700651 / DSM 11573 / NCIMB 13689 / SK2), this protein is dTTP/UTP pyrophosphatase.